The sequence spans 130 residues: Protein ApaG (130 aa).

The region spanning 3–127 is the ApaG domain; it reads KAETRGITVT…FSLDSPHLRR (125 aa).

This chain is Protein ApaG, found in Methylorubrum populi (strain ATCC BAA-705 / NCIMB 13946 / BJ001) (Methylobacterium populi).